Here is a 254-residue protein sequence, read N- to C-terminus: Type III pantothenate kinase (254 aa).

6–13 (DVGNTNTV) contacts ATP. Residues tyrosine 100 and 107 to 110 (GADR) each bind substrate. Residue aspartate 109 is the Proton acceptor of the active site. Aspartate 129 provides a ligand contact to K(+). Threonine 132 serves as a coordination point for ATP. Threonine 184 is a substrate binding site.

Belongs to the type III pantothenate kinase family. As to quaternary structure, homodimer. The cofactor is NH4(+). It depends on K(+) as a cofactor.

The protein resides in the cytoplasm. It carries out the reaction (R)-pantothenate + ATP = (R)-4'-phosphopantothenate + ADP + H(+). The protein operates within cofactor biosynthesis; coenzyme A biosynthesis; CoA from (R)-pantothenate: step 1/5. Its function is as follows. Catalyzes the phosphorylation of pantothenate (Pan), the first step in CoA biosynthesis. The chain is Type III pantothenate kinase from Halalkalibacterium halodurans (strain ATCC BAA-125 / DSM 18197 / FERM 7344 / JCM 9153 / C-125) (Bacillus halodurans).